We begin with the raw amino-acid sequence, 60 residues long: Ribosome-inactivating protein dianthin-32 (60 aa).

It belongs to the ribosome-inactivating protein family. Type 1 RIP subfamily.

It carries out the reaction Endohydrolysis of the N-glycosidic bond at one specific adenosine on the 28S rRNA.. Its function is as follows. Single-chain ribosome-inactivating protein. The polypeptide is Ribosome-inactivating protein dianthin-32 (Dianthus caryophyllus (Carnation)).